The chain runs to 428 residues: MTEAMKITLSTLPADARWGEKATWSINNDGIALHLNGKDDLGLIQRAARKIDGMGIKHVALSGEGWNTDRAWAFWAGYKGPKGQRQVEWPTLDDAQRSELDNRLTIIDWVRDTINAPAEELGPEQLAQRAVDLLCGVAGEKVSYRITKGEDLREQNYLGLHTVGRGSERPPVLLALDYNPTGDKDAPVYACLVGKGITFDSGGYSIKQSAFMDSMKSDMGGAATITGALAFAITRGLNKRVKLYLCCADNLISGNAFKLGDIIHYRNGKTVEVMNTDAEGRLVLADGLIDASAQKPALIIDAATLTGAAKTALGNDYHALFSFDDALANRLLASAQAENEAFWRLPLAEFHRNQLPSNFAELNNTGSAAYPAGASTAAGFLSHFVENYHQGWLHIDCSATYRKSAVEQWSAGATGLGVRTIANLLTAE.

Positions 195 and 200 each coordinate Mn(2+). Lys-207 is an active-site residue. Asp-218, Asp-277, and Glu-279 together coordinate Mn(2+). Arg-281 is an active-site residue.

It belongs to the peptidase M17 family. As to quaternary structure, homohexamer. Mn(2+) serves as cofactor.

It localises to the cytoplasm. It carries out the reaction Release of an N-terminal amino acid, Xaa, from a peptide or arylamide. Xaa is preferably Glu or Asp but may be other amino acids, including Leu, Met, His, Cys and Gln.. Functionally, probably plays an important role in intracellular peptide degradation. This is Peptidase B from Klebsiella pneumoniae (strain 342).